A 336-amino-acid chain; its full sequence is Nicotinate-nucleotide--dimethylbenzimidazole phosphoribosyltransferase (336 aa).

Glutamate 304 acts as the Proton acceptor in catalysis.

The protein belongs to the CobT family.

The catalysed reaction is 5,6-dimethylbenzimidazole + nicotinate beta-D-ribonucleotide = alpha-ribazole 5'-phosphate + nicotinate + H(+). The protein operates within nucleoside biosynthesis; alpha-ribazole biosynthesis; alpha-ribazole from 5,6-dimethylbenzimidazole: step 1/2. Its function is as follows. Catalyzes the synthesis of alpha-ribazole-5'-phosphate from nicotinate mononucleotide (NAMN) and 5,6-dimethylbenzimidazole (DMB). The sequence is that of Nicotinate-nucleotide--dimethylbenzimidazole phosphoribosyltransferase from Mesorhizobium japonicum (strain LMG 29417 / CECT 9101 / MAFF 303099) (Mesorhizobium loti (strain MAFF 303099)).